The following is a 239-amino-acid chain: UDP-2,3-diacylglucosamine hydrolase (239 aa).

5 residues coordinate Mn(2+): Asp9, His11, Asp42, Asn80, and His115. 80 to 81 provides a ligand contact to substrate; the sequence is NR. Substrate-binding residues include Asp123, Ser161, Lys165, Lys168, and His196. Mn(2+)-binding residues include His196 and His198.

The protein belongs to the LpxH family. Mn(2+) serves as cofactor.

It is found in the cell inner membrane. The catalysed reaction is UDP-2-N,3-O-bis[(3R)-3-hydroxytetradecanoyl]-alpha-D-glucosamine + H2O = 2-N,3-O-bis[(3R)-3-hydroxytetradecanoyl]-alpha-D-glucosaminyl 1-phosphate + UMP + 2 H(+). It participates in glycolipid biosynthesis; lipid IV(A) biosynthesis; lipid IV(A) from (3R)-3-hydroxytetradecanoyl-[acyl-carrier-protein] and UDP-N-acetyl-alpha-D-glucosamine: step 4/6. Its function is as follows. Hydrolyzes the pyrophosphate bond of UDP-2,3-diacylglucosamine to yield 2,3-diacylglucosamine 1-phosphate (lipid X) and UMP by catalyzing the attack of water at the alpha-P atom. Involved in the biosynthesis of lipid A, a phosphorylated glycolipid that anchors the lipopolysaccharide to the outer membrane of the cell. The sequence is that of UDP-2,3-diacylglucosamine hydrolase from Pasteurella multocida (strain Pm70).